We begin with the raw amino-acid sequence, 71 residues long: Hainantoxin-X-2 (71 aa).

The N-terminal stretch at 1-26 (MKTAIFTVVLALAVFAVLCLVVSTHA) is a signal peptide. The propeptide occupies 27-43 (ERHSKTDMEDSPMIQER). 2 cysteine pairs are disulfide-bonded: cysteine 52–cysteine 65 and cysteine 61–cysteine 70.

Belongs to the neurotoxin 36 family. 02 subfamily. As to expression, expressed by the venom gland.

The protein localises to the secreted. Reversibly blocks N-type calcium channels (Cav2.2/CACNA1B) in rat dorsal root ganglion cells. Elicits no toxic symptoms in either vertebrates or invertebrates during a period of 48 hours post-injection, when it was assayed in vivo by direct injection into mice and cockroaches. The sequence is that of Hainantoxin-X-2 from Cyriopagopus hainanus (Chinese bird spider).